Here is a 516-residue protein sequence, read N- to C-terminus: GMP synthase [glutamine-hydrolyzing] (516 aa).

The Glutamine amidotransferase type-1 domain occupies 6-199 (KVLILDFGSQ…LFEIAGLTSG (194 aa)). Cysteine 83 functions as the Nucleophile in the catalytic mechanism. Active-site residues include histidine 173 and glutamate 175. A GMPS ATP-PPase domain is found at 200–391 (WTMSSFLETE…LGMPDFIIWR (192 aa)). ATP is bound at residue 227–233 (SGGVDST).

Homodimer.

It carries out the reaction XMP + L-glutamine + ATP + H2O = GMP + L-glutamate + AMP + diphosphate + 2 H(+). Its pathway is purine metabolism; GMP biosynthesis; GMP from XMP (L-Gln route): step 1/1. Catalyzes the synthesis of GMP from XMP. The chain is GMP synthase [glutamine-hydrolyzing] from Solidesulfovibrio magneticus (strain ATCC 700980 / DSM 13731 / RS-1) (Desulfovibrio magneticus).